Here is a 115-residue protein sequence, read N- to C-terminus: Large ribosomal subunit protein uL22 (115 aa).

This sequence belongs to the universal ribosomal protein uL22 family. In terms of assembly, part of the 50S ribosomal subunit.

This protein binds specifically to 23S rRNA; its binding is stimulated by other ribosomal proteins, e.g. L4, L17, and L20. It is important during the early stages of 50S assembly. It makes multiple contacts with different domains of the 23S rRNA in the assembled 50S subunit and ribosome. Its function is as follows. The globular domain of the protein is located near the polypeptide exit tunnel on the outside of the subunit, while an extended beta-hairpin is found that lines the wall of the exit tunnel in the center of the 70S ribosome. The sequence is that of Large ribosomal subunit protein uL22 from Coxiella burnetii (strain CbuK_Q154) (Coxiella burnetii (strain Q154)).